The following is a 610-amino-acid chain: MAIRQLSETLINQIAAGEVIERPASAAKELIENALDAGATRIEIATAGGGKALLRVSDNGSGMDAADLELAIRRHCTSKISETLEDIRTLGFRGEALPSIGSVARLSIASRKRDSAGGHEIAVAGGKVLHLRPAGANPGTIVEVRDLFFATPARLKFLKTEKAEAGAITEIVKRMAIAFPAVRFVLSGSDRATLEFPATGDDHLARMAQVLGKDFSDNAIALDAVREEISLTGFAGVPTFNRGNSAHQYAFVNGRPVQDKLILSAIRGAYAETIPSGRYPVAVLSIALDPALVDVNVHPAKSDVRFRDPGLVRGLIVGAIREALARDGSRAATTGASDMLRAFRPGFQPYGQRPQAPWSAETSPSRPYQPAPAFSERPQASFDGLSTPTARAEPQFSPDPVSPGLASPRPVAPETVGRYPLGAARAQIHANYIVAQTEDGLVIVDQHAAHERLVFEAMRKALHSKRLASQVLLIPEIVDIPEEDCDRLMLHAAEFAELGLAIERFGPGAIAVRETPAMLGEVDAHGLIRQLADEIAEWDTASGLSAKLEYVAATMACHGSVRSGRRLRPEEMNALLREMEVTPGSGQCNHGRPTYIELKLSDIERLFGRS.

Residues 351-406 (GQRPQAPWSAETSPSRPYQPAPAFSERPQASFDGLSTPTARAEPQFSPDPVSPGLA) form a disordered region.

Belongs to the DNA mismatch repair MutL/HexB family.

Functionally, this protein is involved in the repair of mismatches in DNA. It is required for dam-dependent methyl-directed DNA mismatch repair. May act as a 'molecular matchmaker', a protein that promotes the formation of a stable complex between two or more DNA-binding proteins in an ATP-dependent manner without itself being part of a final effector complex. This Rhizobium etli (strain ATCC 51251 / DSM 11541 / JCM 21823 / NBRC 15573 / CFN 42) protein is DNA mismatch repair protein MutL.